A 470-amino-acid polypeptide reads, in one-letter code: ATP synthase subunit beta (470 aa).

157 to 164 (GGAGVGKT) contributes to the ATP binding site.

This sequence belongs to the ATPase alpha/beta chains family. As to quaternary structure, F-type ATPases have 2 components, CF(1) - the catalytic core - and CF(0) - the membrane proton channel. CF(1) has five subunits: alpha(3), beta(3), gamma(1), delta(1), epsilon(1). CF(0) has three main subunits: a(1), b(2) and c(9-12). The alpha and beta chains form an alternating ring which encloses part of the gamma chain. CF(1) is attached to CF(0) by a central stalk formed by the gamma and epsilon chains, while a peripheral stalk is formed by the delta and b chains.

It localises to the cell inner membrane. It catalyses the reaction ATP + H2O + 4 H(+)(in) = ADP + phosphate + 5 H(+)(out). In terms of biological role, produces ATP from ADP in the presence of a proton gradient across the membrane. The catalytic sites are hosted primarily by the beta subunits. This is ATP synthase subunit beta from Geotalea uraniireducens (strain Rf4) (Geobacter uraniireducens).